Reading from the N-terminus, the 1377-residue chain is DNA-directed RNA polymerase subunit beta (1377 aa).

The protein belongs to the RNA polymerase beta chain family. The RNAP catalytic core consists of 2 alpha, 1 beta, 1 beta' and 1 omega subunit. When a sigma factor is associated with the core the holoenzyme is formed, which can initiate transcription.

The catalysed reaction is RNA(n) + a ribonucleoside 5'-triphosphate = RNA(n+1) + diphosphate. Its function is as follows. DNA-dependent RNA polymerase catalyzes the transcription of DNA into RNA using the four ribonucleoside triphosphates as substrates. This is DNA-directed RNA polymerase subunit beta from Campylobacter lari (strain RM2100 / D67 / ATCC BAA-1060).